Here is a 799-residue protein sequence, read N- to C-terminus: Elongation factor G, mitochondrial (799 aa).

The N-terminal 24 residues, 1-24 (MRCPSLARLPHRAVSGLTRTPVRF), are a transit peptide targeting the mitochondrion. Positions 97 to 384 (SRVRNIGIAA…GVIDYLPNPS (288 aa)) constitute a tr-type G domain. GTP-binding positions include 106–113 (AHIDSGKT), 182–186 (DTPGH), and 236–239 (NKMD).

This sequence belongs to the TRAFAC class translation factor GTPase superfamily. Classic translation factor GTPase family. EF-G/EF-2 subfamily.

It localises to the mitochondrion. It participates in protein biosynthesis; polypeptide chain elongation. In terms of biological role, mitochondrial GTPase that catalyzes the GTP-dependent ribosomal translocation step during translation elongation. During this step, the ribosome changes from the pre-translocational (PRE) to the post-translocational (POST) state as the newly formed A-site-bound peptidyl-tRNA and P-site-bound deacylated tRNA move to the P and E sites, respectively. Catalyzes the coordinated movement of the two tRNA molecules, the mRNA and conformational changes in the ribosome. This is Elongation factor G, mitochondrial (mef1) from Emericella nidulans (strain FGSC A4 / ATCC 38163 / CBS 112.46 / NRRL 194 / M139) (Aspergillus nidulans).